The primary structure comprises 62 residues: Large ribosomal subunit protein bL33 (62 aa).

The protein belongs to the bacterial ribosomal protein bL33 family.

This chain is Large ribosomal subunit protein bL33, found in Trichodesmium erythraeum (strain IMS101).